Consider the following 370-residue polypeptide: ATP synthase gamma chain, chloroplastic (370 aa).

A chloroplast-targeting transit peptide spans 1–54 (MRSFCIAALLAVASAFTTQPTSFTVKTANVGERASGVFPEQSSAHRTRKATIVM). Cys145 is an active-site residue.

The protein belongs to the ATPase gamma chain family. F-type ATPases have 2 components, CF(1) - the catalytic core - and CF(0) - the membrane proton channel. CF(1) has five subunits: alpha(3), beta(3), gamma(1), delta(1), epsilon(1). CF(0) has four main subunits: a, b, b' and c.

Its subcellular location is the plastid. The protein localises to the chloroplast thylakoid membrane. In terms of biological role, produces ATP from ADP in the presence of a proton gradient across the membrane. The gamma chain is believed to be important in regulating ATPase activity and the flow of protons through the CF(0) complex. This Phaeodactylum tricornutum (Diatom) protein is ATP synthase gamma chain, chloroplastic (ATPC).